The sequence spans 415 residues: Histidine--tRNA ligase (415 aa).

The protein belongs to the class-II aminoacyl-tRNA synthetase family. In terms of assembly, homodimer.

The protein resides in the cytoplasm. The enzyme catalyses tRNA(His) + L-histidine + ATP = L-histidyl-tRNA(His) + AMP + diphosphate + H(+). The protein is Histidine--tRNA ligase of Rickettsia bellii (strain RML369-C).